The following is a 185-amino-acid chain: Elongation factor P (185 aa).

The protein belongs to the elongation factor P family.

Its subcellular location is the cytoplasm. It participates in protein biosynthesis; polypeptide chain elongation. Involved in peptide bond synthesis. Stimulates efficient translation and peptide-bond synthesis on native or reconstituted 70S ribosomes in vitro. Probably functions indirectly by altering the affinity of the ribosome for aminoacyl-tRNA, thus increasing their reactivity as acceptors for peptidyl transferase. The sequence is that of Elongation factor P from Streptococcus pyogenes serotype M4 (strain MGAS10750).